A 447-amino-acid chain; its full sequence is Rab GDP dissociation inhibitor alpha (447 aa).

At Ser-427 the chain carries Phosphoserine.

The protein belongs to the Rab GDI family. As to quaternary structure, interacts with RHOH. Interacts with the non-phosphorylated forms of RAB1A, RAB3A, RAB5A, RAB5B, RAB5C, RAB8A, RAB8B, RAB10, RAB12, RAB35, and RAB43.

The protein resides in the cytoplasm. It localises to the golgi apparatus. Its subcellular location is the trans-Golgi network. Its function is as follows. Regulates the GDP/GTP exchange reaction of most Rab proteins by inhibiting the dissociation of GDP from them, and the subsequent binding of GTP to them. Promotes the dissociation of GDP-bound Rab proteins from the membrane and inhibits their activation. Promotes the dissociation of RAB1A, RAB3A, RAB5A and RAB10 from membranes. This chain is Rab GDP dissociation inhibitor alpha (GDI1), found in Canis lupus familiaris (Dog).